The sequence spans 422 residues: MGRRGALLCLLPLLRAAERPEGRADEPGLEAALAGPNASHFFWSNYSFSDWQNFVGRRRYGAESQNPTVKALLVVAYSFIIVFSLFGNVLVCHVIFKNQRMRSATSLFIVNLAVADILITLLNTPFTLVRFVNSTWVFGKGMCHVSRFAQYCSLHVSALTLTAIAVDRHQVIMHPLKPRISITKGVIYITVIWTMATFFSLPHAICQKLFTFKYSEDIVRSLCLPDFPEPADLFWKYLDLATFILLYILPLLIISVAYARVAKKLWLCNTIGDVTTEQYLALRRKKKKTIKMLMLVVVLFALCWFPLNCYVLLLSSKVIHTNNALYFAFHWFAMSSTCYNPFIYCWLNENFRIELKALLSMCQRLPKPQEERPPSPVPSFRVAWTEKSNGRRVPPANNLLLSSHLHSGKTDLSSVEPIVAMS.

Residues 1–16 (MGRRGALLCLLPLLRA) form the signal peptide. The Extracellular portion of the chain corresponds to 17–70 (AERPEGRADEPGLEAALAGPNASHFFWSNYSFSDWQNFVGRRRYGAESQNPTVK). Asparagine 37 and asparagine 45 each carry an N-linked (GlcNAc...) asparagine glycan. A helical transmembrane segment spans residues 71–91 (ALLVVAYSFIIVFSLFGNVLV). Topologically, residues 92-106 (CHVIFKNQRMRSATS) are cytoplasmic. The helical transmembrane segment at 107–128 (LFIVNLAVADILITLLNTPFTL) threads the bilayer. Topologically, residues 129 to 144 (VRFVNSTWVFGKGMCH) are extracellular. Asparagine 133 carries an N-linked (GlcNAc...) asparagine glycan. A helical transmembrane segment spans residues 145-166 (VSRFAQYCSLHVSALTLTAIAV). Topologically, residues 167-185 (DRHQVIMHPLKPRISITKG) are cytoplasmic. A helical transmembrane segment spans residues 186–207 (VIYITVIWTMATFFSLPHAICQ). The Extracellular portion of the chain corresponds to 208 to 237 (KLFTFKYSEDIVRSLCLPDFPEPADLFWKY). A helical transmembrane segment spans residues 238-259 (LDLATFILLYILPLLIISVAYA). Over 260–292 (RVAKKLWLCNTIGDVTTEQYLALRRKKKKTIKM) the chain is Cytoplasmic. The helical transmembrane segment at 293–314 (LMLVVVLFALCWFPLNCYVLLL) threads the bilayer. The Extracellular segment spans residues 315–326 (SSKVIHTNNALY). Residues 327–347 (FAFHWFAMSSTCYNPFIYCWL) form a helical membrane-spanning segment. The Cytoplasmic portion of the chain corresponds to 348–422 (NENFRIELKA…SSVEPIVAMS (75 aa)).

Belongs to the G-protein coupled receptor 1 family.

It localises to the cell membrane. Its function is as follows. G-protein coupled receptor for PEN, a neuropeptide produced from the precursor protein, proSAAS (encoded by PCSK1N). Acts through a G(i)- and G(q)-alpha-alpha-mediated pathway in response to PEN. Plays a role in food intake and body weight regulation. May contribute to the regulation of anxiety-related behaviors. The sequence is that of G-protein coupled receptor 83 (GPR83) from Canis lupus familiaris (Dog).